The chain runs to 248 residues: 5'-nucleotidase SurE (248 aa).

A divalent metal cation is bound by residues aspartate 8, aspartate 9, serine 39, and asparagine 91.

Belongs to the SurE nucleotidase family. A divalent metal cation is required as a cofactor.

The protein resides in the cytoplasm. It carries out the reaction a ribonucleoside 5'-phosphate + H2O = a ribonucleoside + phosphate. Nucleotidase that shows phosphatase activity on nucleoside 5'-monophosphates. The sequence is that of 5'-nucleotidase SurE from Citrifermentans bemidjiense (strain ATCC BAA-1014 / DSM 16622 / JCM 12645 / Bem) (Geobacter bemidjiensis).